The chain runs to 380 residues: GATOR1 complex protein NPRL2 (380 aa).

Positions 1–133 (MGSGCRIECI…SKQKLVPIMT (133 aa)) are interaction with PDPK1. A GDP-binding site is contributed by arginine 78. Position 78 is an asymmetric dimethylarginine (arginine 78). Residues lysine 158 and lysine 357 each participate in a glycyl lysine isopeptide (Lys-Gly) (interchain with G-Cter in ubiquitin) cross-link.

The protein belongs to the NPR2 family. Within the GATOR complex, component of the GATOR1 subcomplex, made of DEPDC5, NPRL2 and NPRL3. GATOR1 mediates the strong interaction of the GATOR complex with small GTPases Rag (RagA/RRAGA, RagB/RRAGB, RagC/RRAGC and/or RagD/RRAGD) heterodimers. GATOR1 interacts with GPR155/LYCHOS; interaction takes place in presence of cholesterol and prevents interaction between GATOR1 and KICSTOR. Interacts with PDPK1. In terms of processing, in the presence of abundant amino acids, ubiquitinated at Lys-158 and Lys-357 via 'Lys-6'-linked ubiquitination by the WDR24 component of the GATOR2 complex, thereby inhibiting the GATOR1 complex and promoting mTORC1 activation. Asymmetric dimethylation at Arg-78 by PRMT1 inhibits the GTPase activator activity of the GATOR1 complex and consequently inducing timely mTORC1 activation under methionine-sufficient conditions. In terms of tissue distribution, most abundant in skeletal muscle, followed by brain, liver and pancreas, with lower amounts in lung, kidney, placenta and heart. Expressed in the frontal lobe cortex as well as in the temporal, parietal, and occipital lobes. Expressed in most lung cancer cell lines tested.

The protein resides in the lysosome membrane. Catalytic component of the GATOR1 complex, a multiprotein complex that functions as an inhibitor of the amino acid-sensing branch of the mTORC1 pathway. In response to amino acid depletion, the GATOR1 complex has GTPase activating protein (GAP) activity and strongly increases GTP hydrolysis by RagA/RRAGA (or RagB/RRAGB) within heterodimeric Rag complexes, thereby turning them into their inactive GDP-bound form, releasing mTORC1 from lysosomal surface and inhibiting mTORC1 signaling. In the presence of abundant amino acids, the GATOR1 complex is ubiquitinated and inhibited by GATOR2. Within the GATOR1 complex, NPRL2 constitutes the catalytic subunit that mediates the GTPase activator activity and under methionine-sufficient conditions, the GTPase activator activity is inhibited by PRMT1 through methylation and consequently inducing timely mTORC1 activation. Its function is as follows. Suppresses Src-dependent tyrosine phosphorylation and activation of PDPK1 and its downstream signaling. Down-regulates PDPK1 kinase activity by interfering with tyrosine phosphorylation at 'Tyr-9', 'Tyr-373' and 'Tyr-376' residues. May act as a tumor suppressor. Suppresses cell growth and enhances sensitivity to various anticancer drugs. In Homo sapiens (Human), this protein is GATOR1 complex protein NPRL2.